Here is a 616-residue protein sequence, read N- to C-terminus: Proline--tRNA ligase (616 aa).

The protein belongs to the class-II aminoacyl-tRNA synthetase family. ProS type 1 subfamily. In terms of assembly, homodimer.

Its subcellular location is the cytoplasm. The catalysed reaction is tRNA(Pro) + L-proline + ATP = L-prolyl-tRNA(Pro) + AMP + diphosphate. Its function is as follows. Catalyzes the attachment of proline to tRNA(Pro) in a two-step reaction: proline is first activated by ATP to form Pro-AMP and then transferred to the acceptor end of tRNA(Pro). As ProRS can inadvertently accommodate and process non-cognate amino acids such as alanine and cysteine, to avoid such errors it has two additional distinct editing activities against alanine. One activity is designated as 'pretransfer' editing and involves the tRNA(Pro)-independent hydrolysis of activated Ala-AMP. The other activity is designated 'posttransfer' editing and involves deacylation of mischarged Ala-tRNA(Pro). The misacylated Cys-tRNA(Pro) is not edited by ProRS. The chain is Proline--tRNA ligase from Streptococcus sanguinis (strain SK36).